A 106-amino-acid chain; its full sequence is MSMTSSVRVEWIAAVTIAAGTAAIGYLAYKRFYVKDHRNKSMVNPHIQKDNPKVVHAFDMEDLGDKAVYCRCWRSKKFPLCDGSHTKHNEETGDNVGPLIIKKKDT.

Ser2 is subject to N-acetylserine. The chain crosses the membrane as a helical; Signal-anchor for type III membrane protein span at residues 10 to 29; the sequence is EWIAAVTIAAGTAAIGYLAY. Residues 30–106 are Cytoplasmic-facing; sequence KRFYVKDHRN…GPLIIKKKDT (77 aa). Lys40 participates in a covalent cross-link: Glycyl lysine isopeptide (Lys-Gly) (interchain with G-Cter in ubiquitin). Residue Lys53 is the Schiff-base intermediate with pyridoxal 5'-phosphate of the active site. Lys53 and Lys66 each carry N6-acetyllysine; alternate. Residues Lys53 and Lys66 each participate in a glycyl lysine isopeptide (Lys-Gly) (interchain with G-Cter in ubiquitin); alternate cross-link. Residues Cys70 and Cys72 each coordinate [2Fe-2S] cluster. Residues Lys76 and Lys77 each participate in a glycyl lysine isopeptide (Lys-Gly) (interchain with G-Cter in ubiquitin) cross-link. [2Fe-2S] cluster-binding residues include Cys81 and His85. The tract at residues 84 to 106 is disordered; that stretch reads SHTKHNEETGDNVGPLIIKKKDT. Lys87 is covalently cross-linked (Glycyl lysine isopeptide (Lys-Gly) (interchain with G-Cter in ubiquitin)). An N6-acetyllysine; alternate modification is found at Lys102. A Glycyl lysine isopeptide (Lys-Gly) (interchain with G-Cter in ubiquitin); alternate cross-link involves residue Lys102. Glycyl lysine isopeptide (Lys-Gly) (interchain with G-Cter in ubiquitin) cross-links involve residues Lys103 and Lys104.

It belongs to the CISD protein family. In terms of assembly, homodimer. It depends on [2Fe-2S] cluster as a cofactor. Pyridoxal 5'-phosphate serves as cofactor. In terms of processing, ubiquitinated by PRKN during mitophagy, leading to its degradation and enhancement of mitophagy. Deubiquitinated by USP30.

The protein localises to the mitochondrion outer membrane. The catalysed reaction is L-cysteine + 2-oxoglutarate = 2-oxo-3-sulfanylpropanoate + L-glutamate. In terms of biological role, L-cysteine transaminase that catalyzes the reversible transfer of the amino group from L-cysteine to the alpha-keto acid 2-oxoglutarate to respectively form 2-oxo-3-sulfanylpropanoate and L-glutamate. The catalytic cycle occurs in the presence of pyridoxal 5'-phosphate (PLP) cofactor that facilitates transamination by initially forming an internal aldimine with the epsilon-amino group of active site Lys-55 residue on the enzyme (PLP-enzyme aldimine), subsequently displaced by formation of an external aldimine with the substrate amino group (PLP-L-cysteine aldimine). The external aldimine is further deprotonated to form a carbanion intermediate, which in the presence of 2-oxoglutarate regenerates PLP yielding final products 2-oxo-3-sulfanylpropanoate and L-glutamate. The proton transfer in carbanion intermediate is suggested to be controlled by the active site lysine residue, whereas PLP stabilizes carbanion structure through electron delocalization, also known as the electron sink effect. Plays a key role in regulating maximal capacity for electron transport and oxidative phosphorylation. May be involved in iron-sulfur cluster shuttling and/or in redox reactions. Can transfer the [2Fe-2S] cluster to an apo-acceptor protein only when in the oxidation state, likely serving as a redox sensor that regulates mitochondrial iron-sulfur cluster assembly and iron trafficking upon oxidative stress. The chain is CDGSH iron-sulfur domain-containing protein 1 (CISD1) from Bos taurus (Bovine).